Reading from the N-terminus, the 142-residue chain is Galactose-6-phosphate isomerase subunit LacA (142 aa).

It belongs to the LacAB/RpiB family. Heteromultimeric protein consisting of LacA and LacB.

It catalyses the reaction aldehydo-D-galactose 6-phosphate = keto-D-tagatose 6-phosphate. It participates in carbohydrate metabolism; D-galactose 6-phosphate degradation; D-tagatose 6-phosphate from D-galactose 6-phosphate: step 1/1. The protein is Galactose-6-phosphate isomerase subunit LacA of Clostridium acetobutylicum (strain ATCC 824 / DSM 792 / JCM 1419 / IAM 19013 / LMG 5710 / NBRC 13948 / NRRL B-527 / VKM B-1787 / 2291 / W).